The primary structure comprises 99 residues: DNA-directed RNA polymerase subunit omega (99 aa).

The disordered stretch occupies residues 55-99 (EAGTVISDPNPEEKRERLRIEREERKRQREQEQKELENRLRDEKN). Residues 65–99 (PEEKRERLRIEREERKRQREQEQKELENRLRDEKN) show a composition bias toward basic and acidic residues.

This sequence belongs to the RNA polymerase subunit omega family. In terms of assembly, the RNAP catalytic core consists of 2 alpha, 1 beta, 1 beta' and 1 omega subunit. When a sigma factor is associated with the core the holoenzyme is formed, which can initiate transcription.

It carries out the reaction RNA(n) + a ribonucleoside 5'-triphosphate = RNA(n+1) + diphosphate. In terms of biological role, promotes RNA polymerase assembly. Latches the N- and C-terminal regions of the beta' subunit thereby facilitating its interaction with the beta and alpha subunits. This chain is DNA-directed RNA polymerase subunit omega, found in Enterococcus faecalis (strain ATCC 700802 / V583).